The sequence spans 119 residues: UPF0342 protein Athe_0692 (119 aa).

Belongs to the UPF0342 family.

The protein is UPF0342 protein Athe_0692 of Caldicellulosiruptor bescii (strain ATCC BAA-1888 / DSM 6725 / KCTC 15123 / Z-1320) (Anaerocellum thermophilum).